We begin with the raw amino-acid sequence, 316 residues long: Apolipoprotein E (316 aa).

An N-terminal signal peptide occupies residues M1–A18. Tandem repeats lie at residues V79–A100, P101–G122, S123–G144, Q145–L166, R167–E188, R189–A210, T211–H232, and G233–E254. The interval V79–E254 is 8 X 22 AA approximate tandem repeats. M142 carries the methionine sulfoxide modification. S146 carries the phosphoserine modification. The interval H157–R167 is LDL and other lipoprotein receptors binding. L161–R164 lines the heparin pocket. Residues A209–M289 form a lipid-binding and lipoprotein association region. An O-linked (GalNAc...) threonine glycan is attached at T211. R228–L235 is a heparin binding site. The tract at residues S265 to H316 is homooligomerization. Positions R277–M289 are specificity for association with VLDL.

The protein belongs to the apolipoprotein A1/A4/E family. Homotetramer. May interact with ABCA1; functionally associated with ABCA1 in the biogenesis of HDLs. May interact with APP/A4 amyloid-beta peptide; the interaction is extremely stable in vitro but its physiological significance is unclear. May interact with MAPT. May interact with MAP2. In the cerebrospinal fluid, interacts with secreted SORL1. Interacts with PMEL; this allows the loading of PMEL luminal fragment on ILVs to induce fibril nucleation. In terms of processing, APOE exists as multiple glycosylated and sialylated glycoforms within cells and in plasma. The extent of glycosylation and sialylation are tissue and context specific. Glycated in plasma VLDL. Post-translationally, phosphorylated by FAM20C in the extracellular medium.

The protein localises to the secreted. The protein resides in the extracellular space. It localises to the extracellular matrix. It is found in the extracellular vesicle. Its subcellular location is the endosome. The protein localises to the multivesicular body. Its function is as follows. APOE is an apolipoprotein, a protein associating with lipid particles, that mainly functions in lipoprotein-mediated lipid transport between organs via the plasma and interstitial fluids. APOE is a core component of plasma lipoproteins and is involved in their production, conversion and clearance. Apolipoproteins are amphipathic molecules that interact both with lipids of the lipoprotein particle core and the aqueous environment of the plasma. As such, APOE associates with chylomicrons, chylomicron remnants, very low density lipoproteins (VLDL) and intermediate density lipoproteins (IDL) but shows a preferential binding to high-density lipoproteins (HDL). It also binds a wide range of cellular receptors including the LDL receptor/LDLR and the very low-density lipoprotein receptor/VLDLR that mediate the cellular uptake of the APOE-containing lipoprotein particles. Finally, APOE also has a heparin-binding activity and binds heparan-sulfate proteoglycans on the surface of cells, a property that supports the capture and the receptor-mediated uptake of APOE-containing lipoproteins by cells. In Ovis aries musimon (Mouflon), this protein is Apolipoprotein E (APOE).